The sequence spans 197 residues: Translation machinery-associated protein 22 (197 aa).

In terms of domain architecture, SUI1 spans 102–173; the sequence is VQIKRVERNK…DVKEWLLEVY (72 aa).

This sequence belongs to the DENR family. Interacts with the 40S ribosomal subunit.

The protein localises to the cytoplasm. The protein is Translation machinery-associated protein 22 (tma22) of Aspergillus niger (strain ATCC MYA-4892 / CBS 513.88 / FGSC A1513).